The following is a 340-amino-acid chain: Guanine nucleotide-binding protein G(I)/G(S)/G(T) subunit beta-1 (340 aa).

WD repeat units lie at residues 53 to 83 (GHLA…IIWD), 95 to 125 (LRSS…PIYN), 141 to 170 (GHTG…ALWD), 182 to 212 (GHTG…KLWD), 224 to 254 (GHES…RLFD), 268 to 298 (NIIC…NVWD), and 310 to 340 (GHDN…KIWN).

Belongs to the WD repeat G protein beta family. G proteins are composed of 3 units, alpha, beta and gamma.

Its function is as follows. Guanine nucleotide-binding proteins (G proteins) are involved as a modulator or transducer in various transmembrane signaling systems. The beta and gamma chains are required for the GTPase activity, for replacement of GDP by GTP, and for G protein-effector interaction. The sequence is that of Guanine nucleotide-binding protein G(I)/G(S)/G(T) subunit beta-1 (gnb1) from Xenopus laevis (African clawed frog).